Consider the following 459-residue polypeptide: Putrescine aminotransferase (459 aa).

Residues 150–151 (GT) and glutamine 274 contribute to the pyridoxal 5'-phosphate site. The residue at position 300 (lysine 300) is an N6-(pyridoxal phosphate)lysine. Threonine 332 lines the pyridoxal 5'-phosphate pocket.

The protein belongs to the class-III pyridoxal-phosphate-dependent aminotransferase family. Putrescine aminotransferase subfamily. It depends on pyridoxal 5'-phosphate as a cofactor.

It catalyses the reaction an alkane-alpha,omega-diamine + 2-oxoglutarate = an omega-aminoaldehyde + L-glutamate. The catalysed reaction is putrescine + 2-oxoglutarate = 1-pyrroline + L-glutamate + H2O. It carries out the reaction cadaverine + 2-oxoglutarate = 5-aminopentanal + L-glutamate. Its pathway is amine and polyamine degradation; putrescine degradation; 4-aminobutanal from putrescine (transaminase route): step 1/1. Functionally, catalyzes the aminotransferase reaction from putrescine to 2-oxoglutarate, leading to glutamate and 4-aminobutanal, which spontaneously cyclizes to form 1-pyrroline. This is the first step in one of two pathways for putrescine degradation, where putrescine is converted into 4-aminobutanoate (gamma-aminobutyrate or GABA) via 4-aminobutanal. Also functions as a cadaverine transaminase in a a L-lysine degradation pathway to succinate that proceeds via cadaverine, glutarate and L-2-hydroxyglutarate. The sequence is that of Putrescine aminotransferase from Salmonella paratyphi A (strain ATCC 9150 / SARB42).